We begin with the raw amino-acid sequence, 155 residues long: Small ribosomal subunit protein uS7c (155 aa).

The protein belongs to the universal ribosomal protein uS7 family. Part of the 30S ribosomal subunit.

Its subcellular location is the plastid. One of the primary rRNA binding proteins, it binds directly to 16S rRNA where it nucleates assembly of the head domain of the 30S subunit. The protein is Small ribosomal subunit protein uS7c (rps7) of Lathraea clandestina (Purple toothwort).